The primary structure comprises 229 residues: Heptaprenylglyceryl phosphate synthase (229 aa).

Sn-glycerol 1-phosphate is bound at residue K12. Mg(2+) is bound by residues D14 and T40. Sn-glycerol 1-phosphate is bound by residues Y159–G164, G189, and G209–N210.

This sequence belongs to the GGGP/HepGP synthase family. Group I subfamily. As to quaternary structure, homodimer. Mg(2+) is required as a cofactor.

It carries out the reaction sn-glycerol 1-phosphate + all-trans-heptaprenyl diphosphate = 3-heptaprenyl-sn-glycero-1-phosphate + diphosphate. The protein operates within membrane lipid metabolism; glycerophospholipid metabolism. Functionally, prenyltransferase that catalyzes in vivo the transfer of the heptaprenyl moiety of heptaprenyl pyrophosphate (HepPP; 35 carbon atoms) to the C3 hydroxyl of sn-glycerol-1-phosphate (G1P), producing heptaprenylglyceryl phosphate (HepGP). This reaction is an ether-bond-formation step in the biosynthesis of archaea-type G1P-based membrane lipids found in Bacillales. The sequence is that of Heptaprenylglyceryl phosphate synthase from Oceanobacillus iheyensis (strain DSM 14371 / CIP 107618 / JCM 11309 / KCTC 3954 / HTE831).